Here is an 88-residue protein sequence, read N- to C-terminus: Small ribosomal subunit protein bS20 (88 aa).

The segment at 1–26 (MANTAQARKRARQNTKRRQNSASQRS) is disordered. The segment covering 7–19 (ARKRARQNTKRRQ) has biased composition (basic residues).

Belongs to the bacterial ribosomal protein bS20 family.

Its function is as follows. Binds directly to 16S ribosomal RNA. The chain is Small ribosomal subunit protein bS20 from Psychrobacter cryohalolentis (strain ATCC BAA-1226 / DSM 17306 / VKM B-2378 / K5).